The primary structure comprises 397 residues: DNA-directed RNA polymerase subunit Rpo1C (397 aa).

The protein belongs to the RNA polymerase beta' chain family. As to quaternary structure, part of the RNA polymerase complex.

It is found in the cytoplasm. The catalysed reaction is RNA(n) + a ribonucleoside 5'-triphosphate = RNA(n+1) + diphosphate. Its function is as follows. DNA-dependent RNA polymerase (RNAP) catalyzes the transcription of DNA into RNA using the four ribonucleoside triphosphates as substrates. Forms part of the jaw domain. The chain is DNA-directed RNA polymerase subunit Rpo1C from Pyrococcus abyssi (strain GE5 / Orsay).